Here is a 288-residue protein sequence, read N- to C-terminus: 4-diphosphocytidyl-2-C-methyl-D-erythritol kinase (288 aa).

The active site involves lysine 11. 100 to 110 (PTSAGLGSGSS) contacts ATP. Residue aspartate 140 is part of the active site.

The protein belongs to the GHMP kinase family. IspE subfamily.

The catalysed reaction is 4-CDP-2-C-methyl-D-erythritol + ATP = 4-CDP-2-C-methyl-D-erythritol 2-phosphate + ADP + H(+). Its pathway is isoprenoid biosynthesis; isopentenyl diphosphate biosynthesis via DXP pathway; isopentenyl diphosphate from 1-deoxy-D-xylulose 5-phosphate: step 3/6. In terms of biological role, catalyzes the phosphorylation of the position 2 hydroxy group of 4-diphosphocytidyl-2C-methyl-D-erythritol. In Wolbachia sp. subsp. Brugia malayi (strain TRS), this protein is 4-diphosphocytidyl-2-C-methyl-D-erythritol kinase.